The following is a 1712-amino-acid chain: Latent-transforming growth factor beta-binding protein 1 (1712 aa).

Residues 1–23 (MAGAWLRWGLLLWAGLLAWSAHG) form the signal peptide. The interval 65 to 118 (TAASSRALAGPPAERTRRTSQPGGAALPGLRSPLPPEPARPGGPSRQLHSKAGA) is disordered. The region spanning 181–213 (TKPSCVPPCQNGGMCLRPQLCVCKPGSKGKACE) is the EGF-like 1 domain. 3 disulfide bridges follow: cysteine 185/cysteine 195, cysteine 189/cysteine 201, and cysteine 203/cysteine 212. Asparagine 339 and asparagine 370 each carry an N-linked (GlcNAc...) asparagine glycan. The region spanning 391–423 (RVVICHLPCMNGGQCSSRDKCQCPPNFTGKLCQ) is the EGF-like 2 domain. 6 disulfides stabilise this stretch: cysteine 395–cysteine 405, cysteine 399–cysteine 411, cysteine 413–cysteine 422, cysteine 551–cysteine 573, cysteine 560–cysteine 586, and cysteine 574–cysteine 589. The N-linked (GlcNAc...) asparagine glycan is linked to asparagine 416. The region spanning 549 to 601 (GRCFQETIGSQCGKALPGLSKQEDCCGTVGTSWGFNKCQKCPKKQSYHGYTQM) is the TB 1 domain. The N-linked (GlcNAc...) asparagine glycan is linked to asparagine 612. Positions 618 to 658 (DINECQLQGVCPNGECLNTMGSYRCSCKMGFGPDPTFSSCV) constitute an EGF-like 3; calcium-binding domain. Cystine bridges form between cysteine 622/cysteine 633, cysteine 628/cysteine 642, cysteine 644/cysteine 657, cysteine 671/cysteine 694, cysteine 681/cysteine 706, cysteine 695/cysteine 709, and cysteine 696/cysteine 721. Serine 639 carries O-linked (Glc) serine glycosylation. Residues 669–721 (GPCYRLVSPGRHCMHPLSVHLTKQICCCSVGKAWGPHCEKCPLPGTAAFKEIC) form the TB 2 domain. Residues 753–799 (NTQPVAKSTHPPPLPAKEEPVEALTSSWEHGPRGAEPEVVTAPPEKE) are disordered. Threonine 761 and threonine 793 each carry an O-linked (GalNAc...) threonine glycan. Residues 865 to 906 (EINECTVNPDICGAGHCINLPVRYTCICYEGYKFSEQLRKCV) enclose the EGF-like 4; calcium-binding domain. Disulfide bonds link cysteine 869-cysteine 881, cysteine 876-cysteine 890, cysteine 892-cysteine 905, cysteine 911-cysteine 923, cysteine 918-cysteine 932, cysteine 934-cysteine 947, cysteine 953-cysteine 964, cysteine 959-cysteine 973, cysteine 976-cysteine 988, cysteine 994-cysteine 1005, cysteine 1000-cysteine 1014, cysteine 1017-cysteine 1028, cysteine 1034-cysteine 1045, cysteine 1040-cysteine 1054, cysteine 1056-cysteine 1069, cysteine 1075-cysteine 1086, cysteine 1081-cysteine 1095, cysteine 1097-cysteine 1110, cysteine 1116-cysteine 1127, cysteine 1122-cysteine 1136, cysteine 1138-cysteine 1151, cysteine 1157-cysteine 1169, cysteine 1164-cysteine 1178, cysteine 1180-cysteine 1192, cysteine 1198-cysteine 1210, cysteine 1204-cysteine 1219, cysteine 1221-cysteine 1234, cysteine 1240-cysteine 1252, cysteine 1246-cysteine 1261, cysteine 1263-cysteine 1276, cysteine 1282-cysteine 1294, cysteine 1289-cysteine 1303, cysteine 1305-cysteine 1319, cysteine 1340-cysteine 1363, cysteine 1350-cysteine 1375, cysteine 1364-cysteine 1380, and cysteine 1365-cysteine 1392. The EGF-like 5; calcium-binding domain occupies 907–948 (DIDECAQVRHLCSQGRCENTEGSFLCVCPAGFMASEEGTNCI). Residue serine 929 is glycosylated (O-linked (Glc) serine). The EGF-like 6; calcium-binding domain maps to 949-989 (DVDECLRPDMCRDGRCINTAGAFRCEYCDSGYRMSRRGYCE). Asparagine 966 is modified ((3R)-3-hydroxyasparagine). An EGF-like 7; calcium-binding domain is found at 990 to 1029 (DIDECLKPSTCPEEQCVNTPGSYQCVPCTEGFRGWNGQCL). A glycan (O-linked (Glc) serine) is linked at serine 1011. The EGF-like 8; calcium-binding domain maps to 1030–1070 (DVDECLQPKVCTNGSCTNLEGSYMCSCHRGYSPTPDHRHCQ). N-linked (GlcNAc...) asparagine glycosylation occurs at asparagine 1042. The O-linked (Glc) serine glycan is linked to serine 1051. Residues 1071-1111 (DIDECQQGNLCMNGQCRNTDGSFRCTCGQGYQLSAAKDQCE) enclose the EGF-like 9; calcium-binding domain. The EGF-like 10; calcium-binding domain occupies 1112–1152 (DIDECEHHHLCSHGQCRNTEGSFQCVCNQGYRASVLGDHCE). (3R)-3-hydroxyasparagine is present on asparagine 1129. Serine 1133 is a glycosylation site (O-linked (Glc) serine). The 41-residue stretch at 1153–1193 (DINECLEDSSVCQGGDCINTAGSYDCTCPDGFQLNDNKGCQ) folds into the EGF-like 11; calcium-binding domain. One can recognise an EGF-like 12; calcium-binding domain in the interval 1194-1235 (DINECAQPGLCGSHGECLNTQGSFHCVCEQGFSISADGRTCE). Serine 1216 carries O-linked (Glc) serine glycosylation. Residues 1236-1277 (DIDECVNNTVCDSHGFCDNTAGSFRCLCYQGFQAPQDGQGCV) enclose the EGF-like 13; calcium-binding domain. A glycan (N-linked (GlcNAc...) asparagine) is linked at asparagine 1242. Residues 1278 to 1320 (DVNECELLSGVCGEAFCENVEGSFLCVCADENQEYSPMTGQCR) enclose the EGF-like 14; calcium-binding domain. The tract at residues 1335 to 1402 (EEKKECYYNL…PRGKGLVPAG (68 aa)) is 8-Cys3 region. One can recognise a TB 3 domain in the interval 1338–1392 (KECYYNLNDASLCDNVLAPNVTKQECCCTSGAGWGDNCEIFPCPVQGTAEFTEMC). Asparagine 1357 carries an N-linked (GlcNAc...) asparagine glycan. Residue serine 1405 is modified to Phosphoserine. The EGF-like 15; calcium-binding domain maps to 1415–1457 (DADECLLFGEEICKNGYCLNTQPGYECYCKQGTYYDPVKLQCF). 10 disulfides stabilise this stretch: cysteine 1419-cysteine 1432, cysteine 1427-cysteine 1441, cysteine 1443-cysteine 1456, cysteine 1462-cysteine 1473, cysteine 1468-cysteine 1482, cysteine 1484-cysteine 1497, cysteine 1517-cysteine 1541, cysteine 1527-cysteine 1553, cysteine 1542-cysteine 1556, and cysteine 1543-cysteine 1568. Residues 1458 to 1498 (DMDECQDPNSCIDGQCVNTEGSYNCFCTHPMVLDASEKRCV) enclose the EGF-like 16; calcium-binding domain. Residue serine 1479 is glycosylated (O-linked (Glc) serine). Positions 1498-1712 (VQPTESNEQI…LNLDKESDLE (215 aa)) are C-terminal domain. In terms of domain architecture, TB 4 spans 1515 to 1568 (DLCWEHLSEEYVCSRPLVGKQTTYTECCCLYGEAWGMQCALCPMKDSDDYAQLC). A phosphoserine mark is found at serine 1588 and serine 1607. In terms of domain architecture, EGF-like 17 spans 1612 to 1652 (QAEECGILNGCENGRCVRVQEGYTCDCFDGYHLDMAKMTCV). Disulfide bonds link cysteine 1616/cysteine 1627, cysteine 1622/cysteine 1636, cysteine 1638/cysteine 1651, cysteine 1657/cysteine 1672, cysteine 1667/cysteine 1681, and cysteine 1683/cysteine 1696. One can recognise an EGF-like 18; calcium-binding domain in the interval 1653 to 1697 (DVNECSELNNRMSLCKNAKCINTEGSYKCLCLPGYIPSDKPNYCT). Serine 1678 is a glycosylation site (O-linked (Glc) serine).

It belongs to the LTBP family. As to quaternary structure, interacts with TGFB1; associates via disulfide bonds with the Latency-associated peptide chain (LAP) regulatory chain of TGFB1, leading to regulate activation of TGF-beta-1. LTBP1 does not bind directly to TGF-beta-1, the active chain of TGFB1. Interacts (via C-terminal domain) with FBN1 (via N-terminal domain). Interacts with FBN2. Interacts with ADAMTSL2. Interacts with EFEMP2. Post-translationally, contains hydroxylated asparagine residues. In terms of processing, two intrachain disulfide bonds from the TB3 domain are rearranged upon TGFB1 binding, and form interchain bonds with TGFB1 propeptide, anchoring it to the extracellular matrix. O-glycosylated on serine residues by POGLUT2 and POGLUT3.

It localises to the secreted. The protein localises to the extracellular space. It is found in the extracellular matrix. Key regulator of transforming growth factor beta (TGFB1, TGFB2 and TGFB3) that controls TGF-beta activation by maintaining it in a latent state during storage in extracellular space. Associates specifically via disulfide bonds with the Latency-associated peptide (LAP), which is the regulatory chain of TGF-beta, and regulates integrin-dependent activation of TGF-beta. Outcompeted by LRRC32/GARP for binding to LAP regulatory chain of TGF-beta. This Mus musculus (Mouse) protein is Latent-transforming growth factor beta-binding protein 1.